A 189-amino-acid chain; its full sequence is Ribosome hibernation promotion factor (189 aa).

The protein belongs to the HPF/YfiA ribosome-associated protein family. Long HPF subfamily. As to quaternary structure, interacts with 100S ribosomes. Not associated with 70S ribosome monomers, about 1 monomer per ribosome.

The protein localises to the cytoplasm. Functionally, required for dimerization of active 70S ribosomes into 100S ribosomes in stationary phase; 100S ribosomes are translationally inactive and sometimes present during exponential growth. May not be the only factor implicated. Might negatively regulate the activity of the sigma-54 factor (SigL). This Bacillus subtilis (strain 168) protein is Ribosome hibernation promotion factor (yvyD).